A 660-amino-acid chain; its full sequence is Acetyl-coenzyme A synthetase (660 aa).

CoA is bound by residues 197–200 (RGGK) and threonine 317. ATP-binding positions include 397–399 (GEP), 421–426 (DTWWQT), aspartate 512, and arginine 528. Serine 536 is a binding site for CoA. Residue arginine 539 participates in ATP binding. Positions 550, 552, and 555 each coordinate Mg(2+). At lysine 625 the chain carries N6-acetyllysine.

The protein belongs to the ATP-dependent AMP-binding enzyme family. Requires Mg(2+) as cofactor. Post-translationally, acetylated. Deacetylation by the SIR2-homolog deacetylase activates the enzyme.

It carries out the reaction acetate + ATP + CoA = acetyl-CoA + AMP + diphosphate. Catalyzes the conversion of acetate into acetyl-CoA (AcCoA), an essential intermediate at the junction of anabolic and catabolic pathways. AcsA undergoes a two-step reaction. In the first half reaction, AcsA combines acetate with ATP to form acetyl-adenylate (AcAMP) intermediate. In the second half reaction, it can then transfer the acetyl group from AcAMP to the sulfhydryl group of CoA, forming the product AcCoA. This is Acetyl-coenzyme A synthetase from Burkholderia thailandensis (strain ATCC 700388 / DSM 13276 / CCUG 48851 / CIP 106301 / E264).